We begin with the raw amino-acid sequence, 144 residues long: Mediator of RNA polymerase II transcription subunit 9 (144 aa).

Residues Q85–E143 are a coiled coil.

It belongs to the Mediator complex subunit 9 family. Component of the Mediator complex.

Its subcellular location is the nucleus. Its function is as follows. Component of the Mediator complex, a coactivator involved in the regulated transcription of nearly all RNA polymerase II-dependent genes. Mediator functions as a bridge to convey information from gene-specific regulatory proteins to the basal RNA polymerase II transcription machinery. Mediator is recruited to promoters by direct interactions with regulatory proteins and serves as a scaffold for the assembly of a functional preinitiation complex with RNA polymerase II and the general transcription factors. The protein is Mediator of RNA polymerase II transcription subunit 9 (MED9) of Drosophila melanogaster (Fruit fly).